The primary structure comprises 310 residues: Cysteine synthase (310 aa).

K46 bears the N6-(pyridoxal phosphate)lysine mark. Pyridoxal 5'-phosphate contacts are provided by residues N76, 180 to 184 (GTGGT), and S268.

It belongs to the cysteine synthase/cystathionine beta-synthase family. In terms of assembly, homodimer. Pyridoxal 5'-phosphate is required as a cofactor.

The catalysed reaction is O-acetyl-L-serine + hydrogen sulfide = L-cysteine + acetate. The protein operates within amino-acid biosynthesis; L-cysteine biosynthesis; L-cysteine from L-serine: step 2/2. The polypeptide is Cysteine synthase (cysK) (Staphylococcus aureus (strain Mu50 / ATCC 700699)).